The sequence spans 250 residues: 2,3-bisphosphoglycerate-dependent phosphoglycerate mutase (250 aa).

Substrate contacts are provided by residues Arg-8–Asn-15, Thr-21–Gly-22, Arg-60, Glu-87–Tyr-90, Lys-98, Arg-114–Arg-115, and Gly-183–Asn-184. His-9 (tele-phosphohistidine intermediate) is an active-site residue. Catalysis depends on Glu-87, which acts as the Proton donor/acceptor.

It belongs to the phosphoglycerate mutase family. BPG-dependent PGAM subfamily. In terms of assembly, homodimer.

The enzyme catalyses (2R)-2-phosphoglycerate = (2R)-3-phosphoglycerate. Its pathway is carbohydrate degradation; glycolysis; pyruvate from D-glyceraldehyde 3-phosphate: step 3/5. Its function is as follows. Catalyzes the interconversion of 2-phosphoglycerate and 3-phosphoglycerate. The polypeptide is 2,3-bisphosphoglycerate-dependent phosphoglycerate mutase (Nitratidesulfovibrio vulgaris (strain ATCC 29579 / DSM 644 / CCUG 34227 / NCIMB 8303 / VKM B-1760 / Hildenborough) (Desulfovibrio vulgaris)).